The following is a 248-amino-acid chain: Coenzyme F420:L-glutamate ligase (248 aa).

Residues 15-18 (IPLI), 45-46 (ET), and K50 each bind GTP. Position 115 (D115) interacts with a divalent metal cation. N118 lines the GTP pocket. Positions 155, 156, and 213 each coordinate a divalent metal cation. Position 211-218 (211-218 (MGQSNEGI)) interacts with GTP.

Belongs to the CofE family. As to quaternary structure, homodimer. The cofactor is Mg(2+). Mn(2+) is required as a cofactor. K(+) serves as cofactor.

It carries out the reaction oxidized coenzyme F420-0 + GTP + L-glutamate = oxidized coenzyme F420-1 + GDP + phosphate + H(+). The enzyme catalyses oxidized coenzyme F420-1 + GTP + L-glutamate = oxidized coenzyme F420-2 + GDP + phosphate + H(+). Its pathway is cofactor biosynthesis; coenzyme F420 biosynthesis. Catalyzes the GTP-dependent successive addition of two or more gamma-linked L-glutamates to the L-lactyl phosphodiester of 7,8-didemethyl-8-hydroxy-5-deazariboflavin (F420-0) to form coenzyme F420-0-glutamyl-glutamate (F420-2) or polyglutamated F420 derivatives. In Methanococcus maripaludis (strain DSM 14266 / JCM 13030 / NBRC 101832 / S2 / LL), this protein is Coenzyme F420:L-glutamate ligase.